A 73-amino-acid chain; its full sequence is Large ribosomal subunit protein uL24 (73 aa).

Residues 53 to 65 (NPKGGFIKKEKPM) are compositionally biased toward basic and acidic residues. The disordered stretch occupies residues 53–73 (NPKGGFIKKEKPMHISNVKKA).

Belongs to the universal ribosomal protein uL24 family. Part of the 50S ribosomal subunit.

In terms of biological role, one of two assembly initiator proteins, it binds directly to the 5'-end of the 23S rRNA, where it nucleates assembly of the 50S subunit. One of the proteins that surrounds the polypeptide exit tunnel on the outside of the subunit. In Helicobacter pylori (strain J99 / ATCC 700824) (Campylobacter pylori J99), this protein is Large ribosomal subunit protein uL24.